The sequence spans 123 residues: MADLKQFAEQLVNLTVKEVNELATILKDEYGIEPAAAAVVVAAGGGDGAAEEAQTEFTVVLKDAGASKLAVVKLVKELTGLGLKEAKDVVDGAPSNVKEGVSKEEAEGLKKSLEEAGATVELK.

Positions 96–123 (NVKEGVSKEEAEGLKKSLEEAGATVELK) are disordered. Basic and acidic residues predominate over residues 100–114 (GVSKEEAEGLKKSLE).

Belongs to the bacterial ribosomal protein bL12 family. As to quaternary structure, homodimer. Part of the ribosomal stalk of the 50S ribosomal subunit. Forms a multimeric L10(L12)X complex, where L10 forms an elongated spine to which 2 to 4 L12 dimers bind in a sequential fashion. Binds GTP-bound translation factors.

Forms part of the ribosomal stalk which helps the ribosome interact with GTP-bound translation factors. Is thus essential for accurate translation. The chain is Large ribosomal subunit protein bL12 from Flavobacterium johnsoniae (strain ATCC 17061 / DSM 2064 / JCM 8514 / BCRC 14874 / CCUG 350202 / NBRC 14942 / NCIMB 11054 / UW101) (Cytophaga johnsonae).